The chain runs to 286 residues: MSEMVDTTQTTTEKKLTQSDIRGVFLRSNLFQGSWNFERMQALGFCFSMVPAIRRLYPENNEARKQAIRRHLEFFNTQPFVAAPILGVTLALEEQRANGAEIDDGAINGIKVGLMGPLAGVGDPIFWGTVRPVFAALGAGIAMSGSLLGPLLFFILFNLVRLATRYYGVAYGYSKGIDIVKDMGGGFLQKLTEGASILGLFVMGALVNKWTHVNIPLVVSRITDQTGKEHVTTVQTILDQLMPGLVPLLLTFACMWLLRKKVNPLWIIVGFFVIGIAGYACGLLGL.

Met1 carries the N-formylmethionine modification. Residues 1 to 17 are Cytoplasmic-facing; that stretch reads MSEMVDTTQTTTEKKLT. The region spanning 14 to 284 is the PTS EIID domain; it reads KKLTQSDIRG…GIAGYACGLL (271 aa). The stretch at 18–55 is an intramembrane region; the sequence is QSDIRGVFLRSNLFQGSWNFERMQALGFCFSMVPAIRR. Topologically, residues 56–62 are cytoplasmic; that stretch reads LYPENNE. An intramembrane segment occupies 63 to 95; sequence ARKQAIRRHLEFFNTQPFVAAPILGVTLALEEQ. Residues 96-103 are Cytoplasmic-facing; sequence RANGAEID. The hydrophobic stretch at 104–143 threads the membrane; the sequence is DGAINGIKVGLMGPLAGVGDPIFWGTVRPVFAALGAGIAM. The Periplasmic segment spans residues 144 to 147; it reads SGSL. A transmembrane span lies at residues 148–176; the sequence is LGPLLFFILFNLVRLATRYYGVAYGYSKG. Residues 177-186 lie on the Cytoplasmic side of the membrane; sequence IDIVKDMGGG. At 187–212 the chain is embedded in the membrane; sequence FLQKLTEGASILGLFVMGALVNKWTH. Residues 213-244 lie on the Periplasmic side of the membrane; that stretch reads VNIPLVVSRITDQTGKEHVTTVQTILDQLMPG. At 245–258 the chain is embedded in the membrane; that stretch reads LVPLLLTFACMWLL. The Cytoplasmic portion of the chain corresponds to 259-264; sequence RKKVNP. Residues 265-283 are membrane-embedded; that stretch reads LWIIVGFFVIGIAGYACGL. Residues 284–286 lie on the Periplasmic side of the membrane; it reads LGL.

As to quaternary structure, homotrimer of protomers that are composed of two subunits, IIC and IID.

The protein localises to the cell inner membrane. In terms of biological role, the phosphoenolpyruvate-dependent sugar phosphotransferase system (sugar PTS), a major carbohydrate active transport system, catalyzes the phosphorylation of incoming sugar substrates concomitantly with their translocation across the cell membrane. The enzyme II ManXYZ PTS system is involved in mannose transport. The chain is PTS system mannose-specific EIID component (manZ) from Escherichia coli O6:H1 (strain CFT073 / ATCC 700928 / UPEC).